Reading from the N-terminus, the 119-residue chain is uncharacterized protein (119 aa).

This is an uncharacterized protein from Escherichia coli (Bacteriophage T4).